The following is a 414-amino-acid chain: Serine hydroxymethyltransferase (414 aa).

(6S)-5,6,7,8-tetrahydrofolate contacts are provided by residues L117 and 121 to 123 (GHL). K226 is modified (N6-(pyridoxal phosphate)lysine). A (6S)-5,6,7,8-tetrahydrofolate-binding site is contributed by 349–351 (SPF).

This sequence belongs to the SHMT family. Homodimer. It depends on pyridoxal 5'-phosphate as a cofactor.

It localises to the cytoplasm. It carries out the reaction (6R)-5,10-methylene-5,6,7,8-tetrahydrofolate + glycine + H2O = (6S)-5,6,7,8-tetrahydrofolate + L-serine. It participates in one-carbon metabolism; tetrahydrofolate interconversion. The protein operates within amino-acid biosynthesis; glycine biosynthesis; glycine from L-serine: step 1/1. Catalyzes the reversible interconversion of serine and glycine with tetrahydrofolate (THF) serving as the one-carbon carrier. Also exhibits THF-independent aldolase activity toward beta-hydroxyamino acids, producing glycine and aldehydes, via a retro-aldol mechanism. This chain is Serine hydroxymethyltransferase, found in Methanospirillum hungatei JF-1 (strain ATCC 27890 / DSM 864 / NBRC 100397 / JF-1).